We begin with the raw amino-acid sequence, 638 residues long: Actin-regulating kinase 1 (638 aa).

Residues 22 to 298 (VEIIKYLTSG…VYQLLKRISI (277 aa)) enclose the Protein kinase domain. ATP contacts are provided by residues 28–36 (LTSGGFAQV) and lysine 56. Aspartate 159 serves as the catalytic Proton acceptor. A Phosphoserine modification is found at serine 478. The segment covering 482 to 515 (YSTRGNIKKNQSVKESLTSSSLPGTSFTPTSTKV) has biased composition (polar residues). The tract at residues 482 to 518 (YSTRGNIKKNQSVKESLTSSSLPGTSFTPTSTKVNLK) is disordered. 2 positions are modified to phosphoserine: serine 522 and serine 535. The segment at 569 to 638 (SEESFNARKM…LAGRKLSLDK (70 aa)) is disordered. The segment covering 582–593 (KLHEKGEIDKPT) has biased composition (basic and acidic residues). The segment at 602–615 (SKDKKTKPTPPPKP) is interaction with SH3 domain of ABP1.

The protein belongs to the protein kinase superfamily. Ser/Thr protein kinase family. In terms of assembly, interacts with ABP1, which is required for proper actin patch localization.

Its subcellular location is the cytoplasm. The protein localises to the cytoskeleton. The protein resides in the actin patch. The enzyme catalyses L-seryl-[protein] + ATP = O-phospho-L-seryl-[protein] + ADP + H(+). It catalyses the reaction L-threonyl-[protein] + ATP = O-phospho-L-threonyl-[protein] + ADP + H(+). Functionally, involved in regulation of actin cytoskeleton organization and endocytosis. This chain is Actin-regulating kinase 1 (ARK1), found in Saccharomyces cerevisiae (strain ATCC 204508 / S288c) (Baker's yeast).